Consider the following 404-residue polypeptide: Floricaula/leafy-like protein FL1 (404 aa).

The interval 210–251 (IGVPEHSSESDERKADTNKQKRRRSKEPGEDGEDRPREHPFI) is disordered. Composition is skewed to basic and acidic residues over residues 215 to 228 (HSSE…DTNK) and 235 to 249 (KEPG…REHP). 3 consecutive DNA-binding regions follow at residues 246–250 (REHPF), 315–322 (NKPKMRHY), and 386–389 (YVPT).

It belongs to the FLO/LFY family. Expressed in both male and female cones, vegetative buds and needles, but not in the roots.

It is found in the nucleus. Probable transcription factor. The protein is Floricaula/leafy-like protein FL1 of Pinus radiata (Monterey pine).